An 88-amino-acid polypeptide reads, in one-letter code: Cell division topological specificity factor (88 aa).

The protein belongs to the MinE family.

In terms of biological role, prevents the cell division inhibition by proteins MinC and MinD at internal division sites while permitting inhibition at polar sites. This ensures cell division at the proper site by restricting the formation of a division septum at the midpoint of the long axis of the cell. This Psychromonas ingrahamii (strain DSM 17664 / CCUG 51855 / 37) protein is Cell division topological specificity factor.